Consider the following 648-residue polypeptide: Primary amine oxidase (648 aa).

The propeptide occupies 1 to 9; sequence MTLNAESEA. 299 to 310 lines the substrate pocket; that stretch reads AFDSGEYNIGNM. The active-site Proton acceptor is the Asp301. A disulfide bond links Cys320 and Cys346. Residue 382 to 387 participates in substrate binding; the sequence is VANYEY. Tyr385 (schiff-base intermediate with substrate; via topaquinone) is an active-site residue. The residue at position 385 (Tyr385) is a 2',4',5'-topaquinone. Cu cation contacts are provided by His436 and His438. Mn(2+) is bound by residues Asp445, Phe446, and Asp584. Residue His595 coordinates Cu cation.

The protein belongs to the copper/topaquinone oxidase family. Homodimer. Cu cation is required as a cofactor. It depends on Zn(2+) as a cofactor. L-topaquinone serves as cofactor. The cofactor is Mn(2+). Post-translationally, topaquinone (TPQ) is generated by copper-dependent autoxidation of a specific tyrosyl residue.

It carries out the reaction a primary methyl amine + O2 + H2O = an aldehyde + H2O2 + NH4(+). In terms of biological role, the exact function of MaoXI is not known. In Arthrobacter sp. (strain P1), this protein is Primary amine oxidase (maoI).